A 374-amino-acid polypeptide reads, in one-letter code: Protein-glutamate methylesterase/protein-glutamine glutaminase (374 aa).

One can recognise a Response regulatory domain in the interval 4 to 121; it reads KVLVVDDSGF…SRNPDKVKQM (118 aa). 4-aspartylphosphate is present on D55. A disordered region spans residues 144–186; it reads PVAAPVPASSPAPASSFASPAPARPAATARAAAPAASHSPAPK. Over residues 154-183 the composition is skewed to low complexity; that stretch reads PAPASSFASPAPARPAATARAAAPAASHSP. The CheB-type methylesterase domain maps to 183 to 374; sequence PAPKRKPYKL…IGKHLVEACV (192 aa). Residues S198, H225, and D318 contribute to the active site.

This sequence belongs to the CheB family. Post-translationally, phosphorylated by CheA. Phosphorylation of the N-terminal regulatory domain activates the methylesterase activity.

It localises to the cytoplasm. The catalysed reaction is [protein]-L-glutamate 5-O-methyl ester + H2O = L-glutamyl-[protein] + methanol + H(+). The enzyme catalyses L-glutaminyl-[protein] + H2O = L-glutamyl-[protein] + NH4(+). Functionally, involved in chemotaxis. Part of a chemotaxis signal transduction system that modulates chemotaxis in response to various stimuli. Catalyzes the demethylation of specific methylglutamate residues introduced into the chemoreceptors (methyl-accepting chemotaxis proteins or MCP) by CheR. Also mediates the irreversible deamidation of specific glutamine residues to glutamic acid. In Pseudomonas putida (Arthrobacter siderocapsulatus), this protein is Protein-glutamate methylesterase/protein-glutamine glutaminase.